Consider the following 604-residue polypeptide: Cell division cycle protein CDT1 (604 aa).

Belongs to the Cdt1 family. As to quaternary structure, associates with the MCM2-7 complex. Interacts with MCM2, ORC1, ORC2 and ORC6.

It localises to the cytoplasm. The protein localises to the nucleus. In terms of biological role, DNA replication licensing factor, required for pre-replication complex assembly. Faithful duplication of the genetic material requires 'once per cell cycle' DNA replication initiation and elongation. Central to this control is the tightly regulated formation of prereplicative complexes (preRCs) at future origins of DNA replication. Required for the recruitment of the MCM2-7 helicase complex to the replication origins. The protein is Cell division cycle protein CDT1 (TAH11) of Saccharomyces cerevisiae (strain ATCC 204508 / S288c) (Baker's yeast).